The following is a 369-amino-acid chain: ERCC4 domain-containing protein EP364R (369 aa).

The 99-residue stretch at 3–101 folds into the ERCC4 domain; it reads FLVADHREHH…QLYFFVEGPA (99 aa). A disordered region spans residues 339-369; the sequence is PLHDVSDDASSDASSPTGHQTLSKEMSLNTA. A compositionally biased stretch (polar residues) spans 354–369; sequence PTGHQTLSKEMSLNTA.

Belongs to the asfivirus EP364R family.

Its function is as follows. Plays a role in the inhibition of type I interferon signaling pathway. Mechanistically, specifically interacts with 2',3'-cGAMP and cleaves it via its phosphodiesterase activity. In turn, prevents 2',3'-cGAMP interaction with host ER-resident STING1 leading to inhibition of downstream signaling pathway and type I interferon production. This African swine fever virus (isolate Tick/South Africa/Pretoriuskop Pr4/1996) (ASFV) protein is ERCC4 domain-containing protein EP364R.